A 90-amino-acid polypeptide reads, in one-letter code: Probable Fe(2+)-trafficking protein (90 aa).

This sequence belongs to the Fe(2+)-trafficking protein family.

Its function is as follows. Could be a mediator in iron transactions between iron acquisition and iron-requiring processes, such as synthesis and/or repair of Fe-S clusters in biosynthetic enzymes. The polypeptide is Probable Fe(2+)-trafficking protein (Vibrio campbellii (strain ATCC BAA-1116)).